A 249-amino-acid chain; its full sequence is MASASGTMAKHEQILVLDPPTDLKFKGPFTDVVTTNLKLRNPSDRKVCFKVKTTAPRRYCVRPNSGIIDPGLTVTVSVMLQPFDYDPNEKSKHKFMVQTIFAPPNISDMEAVWKEAKPDELMDSKLRCVFEMPNENDKLNDMEPSKAVPLNAAKQDGPVPKPHSVSLSDTETRKLVEECKRLQGEMMKLSEENRLLRDEGLRLRKVAHSEKPGSTSAVSFRENVTSPLPSLLVVIAAIFIGFFLGKFIL.

N-acetylalanine is present on A2. Topologically, residues 2 to 227 (ASASGTMAKH…VSFRENVTSP (226 aa)) are cytoplasmic. The MSP domain occupies 14-131 (ILVLDPPTDL…MDSKLRCVFE (118 aa)). Residues 50–53 (KVKT) form a phosphorylated FFAT motif binding region. The residue at position 125 (K125) is an N6-acetyllysine. The residue at position 166 (S166) is a Phosphoserine. Residues 169 to 205 (DTETRKLVEECKRLQGEMMKLSEENRLLRDEGLRLRK) are a coiled coil. A Phosphothreonine modification is found at T170. Residues S214, S216, and S219 each carry the phosphoserine modification. The helical; Anchor for type IV membrane protein transmembrane segment at 228–248 (LPSLLVVIAAIFIGFFLGKFI) threads the bilayer.

The protein belongs to the VAMP-associated protein (VAP) (TC 9.B.17) family. Homodimer; disulfide-linked. Heterodimer with VAPB. Interacts with VAMP1, VAMP2, STX1A, BET1, SEC22C and with the C-terminal domain of OCLN. Interacts (via MSP domain) with OSBPL1A (via FFAT motif). Interacts (via MSP domain) with ZFYVE27; may retain ZFYVE27 in the endoplasmic reticulum and regulate its function in cell projections formation. Interacts with OSBP. Interacts (via C-terminus) with RSAD2/viperin (via C-terminus). Interacts with IFITM3. Interacts with OSBPL3 (phosphorylated form). Interacts with KIF5A in a ZFYVE27-dependent manner. Interacts (via MSP domain) with STARD3 (via phosphorylated FFAT motif); this interaction recruits VAPA to the endosome. Interacts with STARD3NL (via FFAT motif). Interacts with CERT1. Interacts with PLEKHA3 and SACM1L to form a ternary complex. Interacts with VPS13A (via FFAT motif). Interacts with RB1CC1 (via phosphorylated FFAT motif), MIGA2 (via phosphorylated FFAT motif), RMDN3 (via phosphorylated FFAT motif), KCNB1 (via phosphorylated FFAT motif) and KCNB2 (via phosphorylated FFAT motif). Interacts (via MSP domain) with WDR44 (via FFAT-like motif); the interactions connect the endoplasmic reticulum (ER) with the endosomal tubule.

It is found in the endoplasmic reticulum membrane. It localises to the cell junction. The protein localises to the tight junction. The protein resides in the cell membrane. Functionally, endoplasmic reticulum (ER)-anchored protein that mediates the formation of contact sites between the ER and endosomes via interaction with FFAT motif-containing proteins such as STARD3 or WDR44. STARD3-VAPA interaction enables cholesterol transfer from the ER to endosomes. Via interaction with WDR44 participates in neosynthesized protein export. In addition, recruited to the plasma membrane through OSBPL3 binding. The OSBPL3-VAPA complex stimulates RRAS signaling which in turn attenuates integrin beta-1 (ITGB1) activation at the cell surface. With OSBPL3, may regulate ER morphology. May play a role in vesicle trafficking. The sequence is that of Vesicle-associated membrane protein-associated protein A from Bos taurus (Bovine).